The following is a 584-amino-acid chain: Lamin-B1 (584 aa).

The tract at residues 1–22 (MAAAVAPLSPQPRGAAASAALS) is disordered. Residues 2 to 33 (AAAVAPLSPQPRGAAASAALSPTRISRLQEKE) are head. Phosphoserine is present on S22. The IF rod domain maps to 31 to 387 (EKEELRQLND…KLLESEEERL (357 aa)). The tract at residues 34–70 (ELRQLNDRLAVYIDKVRSLETENSALQRRVSEREQVC) is coil 1A. Residues 81–218 (FETELADARK…NVYEEEIKET (138 aa)) form a coil 1B region. The interval 243-385 (QALKEIREQH…YRKLLESEEE (143 aa)) is coil 2. The interval 386 to 584 (RLRLSPGPSS…RKPERSCVVM (199 aa)) is tail. Disordered regions lie at residues 388 to 431 (RLSP…SVSI) and 548 to 584 (TVNE…CVVM). Over residues 394-408 (SSRVTVSRASSSRSV) the composition is skewed to low complexity. A Nuclear localization signal motif is present at residues 414–419 (KRKRID). The LTD domain maps to 429 to 545 (VSISHSASAT…EEVAQRSTVF (117 aa)). Positions 551 to 565 (EGEEEEEEGEEEILE) are enriched in acidic residues. Over residues 575–584 (RKPERSCVVM) the composition is skewed to basic and acidic residues. The residue at position 581 (C581) is a Cysteine methyl ester. C581 carries S-farnesyl cysteine lipidation. The propeptide at 582-584 (VVM) is removed in mature form.

This sequence belongs to the intermediate filament family. Homodimer. Lamin dimers then assemble into dimeric head-to-tail polymers. Ultimately, two head-to-tail polymers assemble laterally into a protofilament with a uniformly shaped rod of 3.5 nm in diameter. In terms of processing, phosphorylation plays a key role in lamin organization, subcellular localization and nuclear envelope disintegration. Phosphorylation by CDK1 at Ser-22 at the onset of mitosis drives lamin disassembly and nuclear envelope breakdown.

It localises to the nucleus lamina. The protein resides in the nucleus envelope. The protein localises to the nucleus. Its subcellular location is the nucleoplasm. It is found in the nucleus matrix. Functionally, lamins are intermediate filament proteins that assemble into a filamentous meshwork, and which constitute the major components of the nuclear lamina, a fibrous layer on the nucleoplasmic side of the inner nuclear membrane. Lamins provide a framework for the nuclear envelope, bridging the nuclear envelope and chromatin. Plays an important role in nuclear assembly, chromatin organization, nuclear membrane and telomere dynamics. The sequence is that of Lamin-B1 (LMNB1) from Gallus gallus (Chicken).